The following is a 258-amino-acid chain: MKDLKKIESYLDKLRIKEKDGEERKIYAEVLDGRTLKTLYKLSAKGYITAMGGVISTGKEANVFYADGVFDGKPVAMAVKIYRIETSEFDKMDEYLYGDERFDMRRISPKEKVFIWTEKEFRNLERAKEAGVSVPQPYTYMKNVLLMEFIGEDELPAPTLVELGRELKELDVEGIFNDVVENVKRLYQEAELVHADLSEYNIMYIDKVYFIDMGQAVTLRHPMAESYLERDVRNIIRFFSKYGVKADFEEMLKEVKGE.

A Protein kinase domain is found at 49-258 (TAMGGVISTG…EEMLKEVKGE (210 aa)). Residues 55-63 (ISTGKEANV) and Lys-80 each bind ATP. Ser-108 carries the post-translational modification Phosphoserine; by autocatalysis. Residues Glu-148 and Ile-150 each contribute to the ATP site. Residue Asp-196 is the Proton acceptor of the active site. 3 residues coordinate ATP: Tyr-200, Asn-201, and Asp-212. Positions 201 and 212 each coordinate Mg(2+). The active-site 4-aspartylphosphate intermediate is the Asp-212.

It belongs to the protein kinase superfamily. RIO-type Ser/Thr kinase family. The cofactor is Mg(2+).

The catalysed reaction is L-seryl-[protein] + ATP = O-phospho-L-seryl-[protein] + ADP + H(+). It carries out the reaction L-threonyl-[protein] + ATP = O-phospho-L-threonyl-[protein] + ADP + H(+). In terms of biological role, autophosphorylation of the rio1 protein is not necessary for maintenance of kinase activity. Prefers ATP over GTP. The yeast ortholog is involved in ribosome biogenesis. Despite the protein kinase domain is proposed to act predominantly as an ATPase. The polypeptide is RIO-type serine/threonine-protein kinase Rio1 (rio1) (Archaeoglobus fulgidus (strain ATCC 49558 / DSM 4304 / JCM 9628 / NBRC 100126 / VC-16)).